Reading from the N-terminus, the 211-residue chain is Protein crossbronx-like (211 aa).

Positions 17 to 177 (NQGYQILAEY…VRNSILWSCK (161 aa)) constitute a UBC core domain.

The protein belongs to the ubiquitin-conjugating enzyme family. FTS subfamily.

The polypeptide is Protein crossbronx-like (Drosophila grimshawi (Hawaiian fruit fly)).